The sequence spans 177 residues: O-acetyl-ADP-ribose deacetylase (177 aa).

In terms of domain architecture, Macro spans 1–175; it reads MKTRIHVVQG…LYERLLTQQG (175 aa). Substrate is bound by residues 11-12, N25, 33-35, and 122-126; these read DI, GVD, and STGVY. Catalysis depends on D35, which acts as the Proton acceptor.

It belongs to the MacroD-type family. YmdB subfamily. As to quaternary structure, homodimer. Interacts with RNase III.

The enzyme catalyses 3''-O-acetyl-ADP-D-ribose + H2O = ADP-D-ribose + acetate + H(+). The catalysed reaction is 2''-O-acetyl-ADP-D-ribose + H2O = ADP-D-ribose + acetate + H(+). Its function is as follows. Deacetylates O-acetyl-ADP ribose to yield ADP-ribose and free acetate. Down-regulates ribonuclease 3 (RNase III) activity. Acts by interacting directly with the region of the ribonuclease that is required for dimerization/activation. This chain is O-acetyl-ADP-ribose deacetylase, found in Shigella dysenteriae serotype 1 (strain Sd197).